Reading from the N-terminus, the 299-residue chain is Proline iminopeptidase (299 aa).

The AB hydrolase-1 domain maps to 26 to 272 (VLLLAGGPGF…QFLYCANGSH (247 aa)). Ser-103 serves as the catalytic Nucleophile. Asp-245 is a catalytic residue. His-272 acts as the Proton donor in catalysis.

Belongs to the peptidase S33 family. Monomer.

The catalysed reaction is Release of N-terminal proline from a peptide.. In terms of biological role, releases the N-terminal proline from various substrates. The chain is Proline iminopeptidase from Chitinophaga pinensis (strain ATCC 43595 / DSM 2588 / LMG 13176 / NBRC 15968 / NCIMB 11800 / UQM 2034).